A 142-amino-acid chain; its full sequence is Large ribosomal subunit protein uL16 (142 aa).

The protein belongs to the universal ribosomal protein uL16 family. Part of the 50S ribosomal subunit.

Its function is as follows. Binds 23S rRNA and is also seen to make contacts with the A and possibly P site tRNAs. The sequence is that of Large ribosomal subunit protein uL16 from Thermotoga neapolitana (strain ATCC 49049 / DSM 4359 / NBRC 107923 / NS-E).